We begin with the raw amino-acid sequence, 431 residues long: Keratin, type I cytoskeletal 40 (431 aa).

The interval 1-89 (MTSDCSSTHC…CEDGVFTSNE (89 aa)) is head. Residues 89–400 (EKETMQFLND…GLLDSEDSRL (312 aa)) form the IF rod domain. The coil 1A stretch occupies residues 90 to 124 (KETMQFLNDRLASYLEKVRSLEETNAELESRIQEQ). A linker 1 region spans residues 125–135 (CEQDIPMVCPD). A coil 1B region spans residues 136-236 (YQRYFNTIED…HEEEVNLLRE (101 aa)). Residues 237–252 (QLGDRLSVELDTAPTL) are linker 12. Residues 253–396 (DLNRVLDEMR…NTYWGLLDSE (144 aa)) form a coil 2 region. Residues 397–431 (DSRLSCSPCSTTCTSSNTCEPCSAYVICTVENCCL) are tail.

Belongs to the intermediate filament family. Heterotetramer of two type I and two type II keratins. Expressed in skin and scalp. Also very weakly expressed in tongue, breast, colon and small intestine. In the hair follicle, it is specifically present in the upper hair cuticle. Not present in the upper cortex (at protein level).

Functionally, may play a role in late hair differentiation. The sequence is that of Keratin, type I cytoskeletal 40 (KRT40) from Homo sapiens (Human).